A 295-amino-acid chain; its full sequence is 15-cis-phytoene synthase (295 aa).

This sequence belongs to the phytoene/squalene synthase family. It depends on ATP as a cofactor. Mn(2+) serves as cofactor.

The enzyme catalyses 2 (2E,6E,10E)-geranylgeranyl diphosphate = 15-cis-phytoene + 2 diphosphate. Its pathway is carotenoid biosynthesis; phytoene biosynthesis. With respect to regulation, significant inhibition is seen at GGPP concentrations above 100 uM. In terms of biological role, involved in the biosynthesis of carotenoids. Catalyzes stereoselectively the condensation of two molecules of geranylgeranyl diphosphate (GGPP) to give prephytoene diphosphate (PPPP) and the subsequent rearrangement of the cyclopropylcarbinyl intermediate to yield 15-cis-phytoene. This Enterobacter agglomerans (Erwinia herbicola) protein is 15-cis-phytoene synthase (crtB).